We begin with the raw amino-acid sequence, 295 residues long: Tetrahydromethanopterin S-methyltransferase subunit E (295 aa).

7 helical membrane-spanning segments follow: residues 4-24, 60-80, 87-107, 140-160, 161-181, 234-254, and 255-275; these read MITG…AGAA, GEPV…FVLM, VIMA…TYAV, GFIV…PIPG, FAHP…IGAI, YGGP…FWNT, and IVFG…LLII.

It belongs to the MtrE family. As to quaternary structure, the complex is composed of 8 subunits; MtrA, MtrB, MtrC, MtrD, MtrE, MtrF, MtrG and MtrH.

Its subcellular location is the cell membrane. The enzyme catalyses 5-methyl-5,6,7,8-tetrahydromethanopterin + coenzyme M + 2 Na(+)(in) = 5,6,7,8-tetrahydromethanopterin + methyl-coenzyme M + 2 Na(+)(out). The protein operates within one-carbon metabolism; methanogenesis from CO(2); methyl-coenzyme M from 5,10-methylene-5,6,7,8-tetrahydromethanopterin: step 2/2. In terms of biological role, part of a complex that catalyzes the formation of methyl-coenzyme M and tetrahydromethanopterin from coenzyme M and methyl-tetrahydromethanopterin. This is an energy-conserving, sodium-ion translocating step. In Methanothermobacter marburgensis (strain ATCC BAA-927 / DSM 2133 / JCM 14651 / NBRC 100331 / OCM 82 / Marburg) (Methanobacterium thermoautotrophicum), this protein is Tetrahydromethanopterin S-methyltransferase subunit E.